A 204-amino-acid polypeptide reads, in one-letter code: Ribosomal RNA small subunit methyltransferase J (204 aa).

S-adenosyl-L-methionine is bound by residues 55–56 (RD), 71–72 (ER), and Asp-123.

It belongs to the methyltransferase superfamily. RsmJ family.

The protein localises to the cytoplasm. It carries out the reaction guanosine(1516) in 16S rRNA + S-adenosyl-L-methionine = N(2)-methylguanosine(1516) in 16S rRNA + S-adenosyl-L-homocysteine + H(+). In terms of biological role, specifically methylates the guanosine in position 1516 of 16S rRNA. In Rhodopseudomonas palustris (strain ATCC BAA-98 / CGA009), this protein is Ribosomal RNA small subunit methyltransferase J.